The following is a 295-amino-acid chain: Mediator of RNA polymerase II transcription subunit 6 (295 aa).

A disordered region spans residues 211 to 243; that stretch reads TATAATNGNNAGGGSNKSSVRPTGGANMATVPS. A Phosphoserine modification is found at S225.

It belongs to the Mediator complex subunit 6 family. In terms of assembly, component of the Mediator complex, which is composed of at least 21 subunits that form three structurally distinct submodules. The Mediator head module contains MED6, MED8, MED11, SRB4/MED17, SRB5/MED18, ROX3/MED19, SRB2/MED20 and SRB6/MED22, the middle module contains MED1, MED4, NUT1/MED5, MED7, CSE2/MED9, NUT2/MED10, SRB7/MED21 and SOH1/MED31, and the tail module contains MED2, PGD1/MED3, RGR1/MED14, GAL11/MED15 and SIN4/MED16. The head and the middle modules interact directly with RNA polymerase II, whereas the elongated tail module interacts with gene-specific regulatory proteins. MED6 interacts directly with SRB4/MED17 and SRB7/MED21.

The protein resides in the nucleus. Component of the Mediator complex, a coactivator involved in the regulated transcription of nearly all RNA polymerase II-dependent genes. Mediator functions as a bridge to convey information from gene-specific regulatory proteins to the basal RNA polymerase II transcription machinery. The Mediator complex, having a compact conformation in its free form, is recruited to promoters by direct interactions with regulatory proteins and serves for the assembly of a functional preinitiation complex with RNA polymerase II and the general transcription factors. The Mediator complex unfolds to an extended conformation and partially surrounds RNA polymerase II, specifically interacting with the unphosphorylated form of the C-terminal domain (CTD) of RNA polymerase II. The Mediator complex dissociates from the RNA polymerase II holoenzyme and stays at the promoter when transcriptional elongation begins. The chain is Mediator of RNA polymerase II transcription subunit 6 (MED6) from Saccharomyces cerevisiae (strain ATCC 204508 / S288c) (Baker's yeast).